The following is a 357-amino-acid chain: MSKRLLILEDGTIFEGESLGANLDVTGELVFNTGMTGYQESITDQSYNGQILTFTYPIVGNYGVNRDDYESIHPTCKAVVVHEAACRPSNWRMQMSFDEFLKAKNIPGITGVDTRAITKIVREHGTMKASLVQARDEVEHQMSQLQATVLPTNQVETSSTTTAYPSPNTGRKVVVVDFGLKHSILRELSKRECNLTVVPYNTSAQEILEMEPDGVMLTNGPGDPTDVPEAIEMIKEIQGKIPIFGICLGHQLFSLANGAKTYKMKFGHRGFNHAVREIATGRIDFTSQNHGYAVSSENLPEDLMITHVEINDDSVEGVRHKHFPAFSVQFHPDAAPGPHDASYLFDDFMDLMDNFKK.

The tract at residues 1–168 (MSKRLLILED…STTTAYPSPN (168 aa)) is CPSase. L-glutamine contacts are provided by Ser-46, Gly-220, and Gly-222. The region spanning 172–357 (KVVVVDFGLK…FMDLMDNFKK (186 aa)) is the Glutamine amidotransferase type-1 domain. Residue Cys-247 is the Nucleophile of the active site. Leu-248, Gln-251, Asn-289, Gly-291, and Tyr-292 together coordinate L-glutamine. Active-site residues include His-331 and Asp-333.

It belongs to the CarA family. Composed of two chains; the small (or glutamine) chain promotes the hydrolysis of glutamine to ammonia, which is used by the large (or ammonia) chain to synthesize carbamoyl phosphate. Tetramer of heterodimers (alpha,beta)4.

The enzyme catalyses hydrogencarbonate + L-glutamine + 2 ATP + H2O = carbamoyl phosphate + L-glutamate + 2 ADP + phosphate + 2 H(+). It catalyses the reaction L-glutamine + H2O = L-glutamate + NH4(+). The protein operates within amino-acid biosynthesis; L-arginine biosynthesis; carbamoyl phosphate from bicarbonate: step 1/1. It functions in the pathway pyrimidine metabolism; UMP biosynthesis via de novo pathway; (S)-dihydroorotate from bicarbonate: step 1/3. Small subunit of the glutamine-dependent carbamoyl phosphate synthetase (CPSase). CPSase catalyzes the formation of carbamoyl phosphate from the ammonia moiety of glutamine, carbonate, and phosphate donated by ATP, constituting the first step of 2 biosynthetic pathways, one leading to arginine and/or urea and the other to pyrimidine nucleotides. The small subunit (glutamine amidotransferase) binds and cleaves glutamine to supply the large subunit with the substrate ammonia. The protein is Carbamoyl phosphate synthase small chain of Lactococcus lactis subsp. lactis (strain IL1403) (Streptococcus lactis).